Here is a 214-residue protein sequence, read N- to C-terminus: Single-pass membrane and coiled-coil domain-containing protein 1 (214 aa).

A coiled-coil region spans residues 6-42 (TTLISLKEAMKRVDHKLQALETQFKELDFTKDNLMQK). The chain crosses the membrane as a helical span at residues 65–81 (ALQLTSMELNILYSYVI).

Its subcellular location is the membrane. The polypeptide is Single-pass membrane and coiled-coil domain-containing protein 1 (SMCO1) (Homo sapiens (Human)).